The sequence spans 1284 residues: Peroxisomal ATPase PEX1 (1284 aa).

Positions 339-373 are disordered; that stretch reads SPKQQQDKSKQGVLLPDKEKQLSKSPDHKQISSNR. Over residues 343 to 373 the composition is skewed to basic and acidic residues; it reads QQDKSKQGVLLPDKEKQLSKSPDHKQISSNR. Residues 600-607 and 882-889 each bind ATP; these read GGKGSGKS and GPPGTGKT. Phosphoserine occurs at positions 1182, 1210, and 1212. Residues 1261–1284 form a disordered region; the sequence is FQNPKKRKNQSGTVFRTGQKVTLA. Polar residues predominate over residues 1270–1284; the sequence is QSGTVFRTGQKVTLA.

This sequence belongs to the AAA ATPase family. As to quaternary structure, homooligomer; homooligomerizes in the cytosol, interaction with PEX6 promotes dissociation of the homooligomer. Interacts with PEX6; forming the PEX1-PEX6 AAA ATPase complex, which is composed of a heterohexamer formed by a trimer of PEX1-PEX6 dimers. Interacts indirectly with PEX26, via its interaction with PEX6.

Its subcellular location is the cytoplasm. It localises to the cytosol. The protein resides in the peroxisome membrane. It carries out the reaction ATP + H2O = ADP + phosphate + H(+). Functionally, component of the PEX1-PEX6 AAA ATPase complex, a protein dislocase complex that mediates the ATP-dependent extraction of the PEX5 receptor from peroxisomal membranes, an essential step for PEX5 recycling. Specifically recognizes PEX5 monoubiquitinated at 'Cys-11', and pulls it out of the peroxisome lumen through the PEX2-PEX10-PEX12 retrotranslocation channel. Extraction by the PEX1-PEX6 AAA ATPase complex is accompanied by unfolding of the TPR repeats and release of bound cargo from PEX5. This chain is Peroxisomal ATPase PEX1, found in Mus musculus (Mouse).